The chain runs to 277 residues: Insertion element IS407 uncharacterized 31.7 kDa protein (277 aa).

An Integrase catalytic domain is found at 103-264 (LPGAPNEVWS…APSEFAAKHR (162 aa)).

The sequence is that of Insertion element IS407 uncharacterized 31.7 kDa protein from Burkholderia multivorans (strain ATCC 17616 / 249).